The chain runs to 415 residues: Probable cytosolic iron-sulfur protein assembly protein 1 (415 aa).

A WD 1 repeat occupies 9–48 (AHDDKVWSLSSHPTLPLLATASTDKCSNIYRLSCSNASSS). Residues 45–70 (ASSSSSSSSPPSPPSPPSSSSPRRNF) are disordered. Over residues 54–63 (PPSPPSPPSS) the composition is skewed to pro residues. WD repeat units follow at residues 79-131 (THRR…DDNT), 160-200 (GHEN…EEFE), 207-246 (DHTQ…DEWS), 253-300 (GHEG…GFNG), 335-374 (IHTH…WEVE), and 380-415 (AHGV…IWEV).

This sequence belongs to the WD repeat CIA1 family. In terms of assembly, interacts with NAR1.

It is found in the cytoplasm. The protein resides in the nucleus. Essential component of the cytosolic iron-sulfur (Fe/S) protein assembly machinery. Required for the maturation of extramitochondrial Fe/S proteins. In Lodderomyces elongisporus (strain ATCC 11503 / CBS 2605 / JCM 1781 / NBRC 1676 / NRRL YB-4239) (Yeast), this protein is Probable cytosolic iron-sulfur protein assembly protein 1.